Here is a 261-residue protein sequence, read N- to C-terminus: Aminoglycoside N(3)-acetyltransferase IV (261 aa).

This sequence belongs to the antibiotic N-acetyltransferase family.

It catalyses the reaction a 2-deoxystreptamine antibiotic + acetyl-CoA = an N(3)-acetyl-2-deoxystreptamine antibiotic + CoA + H(+). Its function is as follows. Resistance to antibiotics containing the 2-deoxy-streptamine ring including gentamicin, kanamycin, tobramycin, neomycin and apramycin. The protein is Aminoglycoside N(3)-acetyltransferase IV (aacC4) of Salmonella sp.